The sequence spans 92 residues: SPbeta prophage-derived DNA-binding protein HU 2 (92 aa).

At Thr4 the chain carries Phosphothreonine. Residues 55–77 (RAARKGRNPQTGEEIDIPATKAP) are disordered.

This sequence belongs to the bacterial histone-like protein family. As to quaternary structure, homodimer.

In terms of biological role, histone-like DNA-binding protein which is capable of wrapping DNA to stabilize it, and thus to prevent its denaturation under extreme environmental conditions. This chain is SPbeta prophage-derived DNA-binding protein HU 2 (hup2), found in Bacillus subtilis (strain 168).